We begin with the raw amino-acid sequence, 1004 residues long: Kinesin-like protein KIN-14R (1004 aa).

Disordered stretches follow at residues 1–21 (MEEE…RIGD), 61–90 (PYVD…MQHD), and 110–169 (ELFS…ATMG). The span at 63-75 (VDDDDDGNSEEEN) shows a compositional bias: acidic residues. A compositionally biased stretch (pro residues) spans 115 to 125 (PSPPQGPPSPS). Coiled coils occupy residues 189–230 (CGQL…AQAS) and 266–338 (LNDL…LYNK). The 327-residue stretch at 345–671 (NIRVFCRCRP…LNFASRVRGI (327 aa)) folds into the Kinesin motor domain. 428–435 (GQTGTGKT) contacts ATP. Positions 691-742 (MAGRAKQDSKNKDAQIKSMEETIQSLEAKNKAKDLLTMNLQEKIKELEAQLL) form a coiled coil. Disordered stretches follow at residues 759–791 (DHLH…STAE) and 946–1004 (SGRR…RQLN). Residues 948-958 (RRAGAGVAGTT) show a composition bias toward low complexity. A compositionally biased stretch (polar residues) spans 995–1004 (NNGTSLRQLN).

Belongs to the TRAFAC class myosin-kinesin ATPase superfamily. Kinesin family. KIN-14 subfamily.

In Oryza sativa subsp. japonica (Rice), this protein is Kinesin-like protein KIN-14R.